We begin with the raw amino-acid sequence, 128 residues long: Flagellar assembly factor FliW (128 aa).

This sequence belongs to the FliW family. As to quaternary structure, interacts with translational regulator CsrA and flagellin(s).

It is found in the cytoplasm. Functionally, acts as an anti-CsrA protein, binds CsrA and prevents it from repressing translation of its target genes, one of which is flagellin. Binds to flagellin and participates in the assembly of the flagellum. This is Flagellar assembly factor FliW from Campylobacter fetus subsp. fetus (strain 82-40).